A 233-amino-acid polypeptide reads, in one-letter code: Phosducin-like protein C2A9.09 (233 aa).

Residues 58 to 212 form the Phosducin domain; sequence EDEEDDEFLQ…DIAALKDPQN (155 aa). Residues 86–233 are thioredoxin fold; the sequence is FGSVYPISKP…VNDDLDDDFD (148 aa). The segment at 207 to 233 is disordered; the sequence is LKDPQNAEDELGKRDSSVNDDLDDDFD. A phosphoserine mark is found at Ser-222 and Ser-223. Over residues 224 to 233 the composition is skewed to acidic residues; it reads VNDDLDDDFD.

The protein belongs to the phosducin family.

The polypeptide is Phosducin-like protein C2A9.09 (Schizosaccharomyces pombe (strain 972 / ATCC 24843) (Fission yeast)).